Consider the following 431-residue polypeptide: 3-isopropylmalate dehydratase large subunit (431 aa).

[4Fe-4S] cluster is bound by residues Cys308, Cys368, and Cys371.

It belongs to the aconitase/IPM isomerase family. LeuC type 2 subfamily. In terms of assembly, heterodimer of LeuC and LeuD. [4Fe-4S] cluster serves as cofactor.

The catalysed reaction is (2R,3S)-3-isopropylmalate = (2S)-2-isopropylmalate. The protein operates within amino-acid biosynthesis; L-leucine biosynthesis; L-leucine from 3-methyl-2-oxobutanoate: step 2/4. Catalyzes the isomerization between 2-isopropylmalate and 3-isopropylmalate, via the formation of 2-isopropylmaleate. The polypeptide is 3-isopropylmalate dehydratase large subunit (Desulfosudis oleivorans (strain DSM 6200 / JCM 39069 / Hxd3) (Desulfococcus oleovorans)).